Here is a 620-residue protein sequence, read N- to C-terminus: UvrABC system protein C (620 aa).

Residues 13 to 92 (DKPGVYIMKN…IKKYSPRYNI (80 aa)) enclose the GIY-YIG domain. Residues 204–239 (TSIIKKLKLEMEKAAEELEFEKAAKIRDRILAIELI) enclose the UVR domain.

This sequence belongs to the UvrC family. Interacts with UvrB in an incision complex.

It is found in the cytoplasm. The UvrABC repair system catalyzes the recognition and processing of DNA lesions. UvrC both incises the 5' and 3' sides of the lesion. The N-terminal half is responsible for the 3' incision and the C-terminal half is responsible for the 5' incision. The chain is UvrABC system protein C from Clostridium perfringens (strain 13 / Type A).